An 831-amino-acid polypeptide reads, in one-letter code: Periplasmic nitrate reductase (831 aa).

The segment at residues 1–31 (MTISRRDLLKAQAAGIAAMAANIPLSSQAPA) is a signal peptide (tat-type signal). The region spanning 41–97 (ITWSKAPCRFCGTGCGVMVGVKEGRVVATHGDLLAEVNRGLNCVKGYFLSKIMYGAD) is the 4Fe-4S Mo/W bis-MGD-type domain. Cys-48, Cys-51, Cys-55, and Cys-83 together coordinate [4Fe-4S] cluster. Residues Lys-85, Gln-152, Asn-177, Cys-181, 214-221 (WGSNMAEM), 245-249 (STFTH), 264-266 (GTD), Met-375, Gln-379, Asn-485, 511-512 (SD), Lys-534, Asp-561, and 721-730 (TGRVLEHWHS) contribute to the Mo-bis(molybdopterin guanine dinucleotide) site. Trp-797 is a substrate binding site. Positions 805 and 822 each coordinate Mo-bis(molybdopterin guanine dinucleotide).

Belongs to the prokaryotic molybdopterin-containing oxidoreductase family. NasA/NapA/NarB subfamily. As to quaternary structure, component of the periplasmic nitrate reductase NapAB complex composed of NapA and NapB. [4Fe-4S] cluster serves as cofactor. Mo-bis(molybdopterin guanine dinucleotide) is required as a cofactor. In terms of processing, predicted to be exported by the Tat system. The position of the signal peptide cleavage has not been experimentally proven.

The protein resides in the periplasm. It catalyses the reaction 2 Fe(II)-[cytochrome] + nitrate + 2 H(+) = 2 Fe(III)-[cytochrome] + nitrite + H2O. Its function is as follows. Catalytic subunit of the periplasmic nitrate reductase complex NapAB. Receives electrons from NapB and catalyzes the reduction of nitrate to nitrite. This Paracoccus pantotrophus (Thiosphaera pantotropha) protein is Periplasmic nitrate reductase.